A 582-amino-acid polypeptide reads, in one-letter code: 15-cis-phytoene desaturase, chloroplastic/chromoplastic (582 aa).

Residues 1-110 (MPQIGLVSAV…FRSSPRPTKP (110 aa)) constitute a chloroplast and chromoplast transit peptide. Residues 140–141 (EA), K148, 165–166 (HI), and Y171 contribute to the FAD site. Position 306 (R306) interacts with substrate. I348 and D537 together coordinate FAD. Residue A545 participates in substrate binding. M547 lines the FAD pocket.

This sequence belongs to the carotenoid/retinoid oxidoreductase family. As to quaternary structure, homotetramer. The cofactor is FAD.

The protein localises to the plastid. Its subcellular location is the chloroplast. It is found in the chromoplast. It localises to the membrane. It carries out the reaction 2 a plastoquinone + 15-cis-phytoene = 9,9',15-tri-cis-zeta-carotene + 2 a plastoquinol. It functions in the pathway carotenoid biosynthesis; lycopene biosynthesis. Inhibited by the herbicides metflurazon, difunone, fluridone and diflufenican. In terms of biological role, converts phytoene into zeta-carotene via the intermediary of phytofluene by the symmetrical introduction of two double bonds at the C-11 and C-11' positions of phytoene with a concomitant isomerization of two neighboring double bonds at the C9 and C9' positions from trans to cis. The sequence is that of 15-cis-phytoene desaturase, chloroplastic/chromoplastic (PDS) from Capsicum annuum (Capsicum pepper).